Consider the following 429-residue polypeptide: Serine--tRNA ligase (429 aa).

Thr-236–Glu-238 contacts L-serine. Arg-267–Glu-269 is a binding site for ATP. Glu-290 is an L-serine binding site. Glu-354 to Ser-357 serves as a coordination point for ATP. Residue Ser-390 coordinates L-serine.

This sequence belongs to the class-II aminoacyl-tRNA synthetase family. Type-1 seryl-tRNA synthetase subfamily. As to quaternary structure, homodimer. The tRNA molecule binds across the dimer.

The protein resides in the cytoplasm. It catalyses the reaction tRNA(Ser) + L-serine + ATP = L-seryl-tRNA(Ser) + AMP + diphosphate + H(+). The catalysed reaction is tRNA(Sec) + L-serine + ATP = L-seryl-tRNA(Sec) + AMP + diphosphate + H(+). Its pathway is aminoacyl-tRNA biosynthesis; selenocysteinyl-tRNA(Sec) biosynthesis; L-seryl-tRNA(Sec) from L-serine and tRNA(Sec): step 1/1. Its function is as follows. Catalyzes the attachment of serine to tRNA(Ser). Is also able to aminoacylate tRNA(Sec) with serine, to form the misacylated tRNA L-seryl-tRNA(Sec), which will be further converted into selenocysteinyl-tRNA(Sec). The chain is Serine--tRNA ligase from Vesicomyosocius okutanii subsp. Calyptogena okutanii (strain HA).